The primary structure comprises 389 residues: Succinate--CoA ligase [ADP-forming] subunit beta (389 aa).

The ATP-grasp domain maps to 9 to 244; that stretch reads KEILRKFGVA…LDEEDPAEVE (236 aa). ATP contacts are provided by residues Lys46, 53-55, Glu99, Ala102, and Glu107; that span reads GRG. Residues Asn199 and Asp213 each contribute to the Mg(2+) site. Substrate is bound by residues Asn264 and 321–323; that span reads GIM.

Belongs to the succinate/malate CoA ligase beta subunit family. Heterotetramer of two alpha and two beta subunits. It depends on Mg(2+) as a cofactor.

It carries out the reaction succinate + ATP + CoA = succinyl-CoA + ADP + phosphate. The enzyme catalyses GTP + succinate + CoA = succinyl-CoA + GDP + phosphate. It participates in carbohydrate metabolism; tricarboxylic acid cycle; succinate from succinyl-CoA (ligase route): step 1/1. Succinyl-CoA synthetase functions in the citric acid cycle (TCA), coupling the hydrolysis of succinyl-CoA to the synthesis of either ATP or GTP and thus represents the only step of substrate-level phosphorylation in the TCA. The beta subunit provides nucleotide specificity of the enzyme and binds the substrate succinate, while the binding sites for coenzyme A and phosphate are found in the alpha subunit. The polypeptide is Succinate--CoA ligase [ADP-forming] subunit beta (Paraburkholderia phytofirmans (strain DSM 17436 / LMG 22146 / PsJN) (Burkholderia phytofirmans)).